A 288-amino-acid chain; its full sequence is Ice-binding protein (288 aa).

Residues 1 to 22 (MFSTTLINTFSLGLLAVVSVVA) form the signal peptide. Short sequence motifs (ice-binding site motif (T-A/G-X-T/N)) lie at residues 75-78 (TAGN) and 154-157 (TAFN). Residue asparagine 194 is glycosylated (N-linked (GlcNAc...) asparagine). Short sequence motifs (ice-binding site motif (T-A/G-X-T/N)) lie at residues 196 to 199 (TGVT) and 265 to 268 (TGAT).

This sequence belongs to the ice-binding protein family.

It is found in the secreted. Binds ice crystals and most probably inhibits their growth in order to prevent cell damage from extracellular ice. This chain is Ice-binding protein, found in Lentinula edodes (Shiitake mushroom).